The primary structure comprises 143 residues: Transmembrane protein 80 (143 aa).

4 helical membrane passes run 22 to 42 (LLCL…LLLV), 47 to 67 (VFTY…LMGI), 88 to 108 (LAAS…FLLW), and 122 to 142 (PLLA…AAFV).

It localises to the membrane. Its subcellular location is the cell projection. The protein resides in the cilium. The protein is Transmembrane protein 80 (TMEM80) of Bos taurus (Bovine).